A 56-amino-acid polypeptide reads, in one-letter code: Large ribosomal subunit protein bL32 (56 aa).

A disordered region spans residues Met-1–Arg-21. Residues Arg-7–Glu-19 show a composition bias toward basic residues.

This sequence belongs to the bacterial ribosomal protein bL32 family.

This chain is Large ribosomal subunit protein bL32, found in Syntrophomonas wolfei subsp. wolfei (strain DSM 2245B / Goettingen).